A 397-amino-acid polypeptide reads, in one-letter code: MFAVRHLLKSRKHFPYAYAAATTTKSTLPMPAVPARVLIGLHTDSDCRNKRLPQIQELSFRKMSSLPTSKKPGSLLEELYAATKPYAQLMRIDRPIGTYLLFWPCAWSIALSADAGCWPDLTMLGLFGTGALIMRGAGCTINDLWDKDIDAKVERTRTRPLASGQISQFDAIVFLSAQLSLGLLVLVQLNWQSILLGASSLGLVITYPLMKRVTYWPQLVLGMAFNWGALLGWCATQGSVNLAACLPLYLSGVCWTIVYDTIYAHQDKLDDLQIGVKSTALRFGENTKVWLSGFTAAMLTGLSTAGWACDQTLPYYAAVGVVGAHLVQQIYSLNIDNPTDCAKKFLSNHQVGLILFLGIVLGTLLKANDTKNQPQPALTSSAASSYASLTQKPEVLS.

A mitochondrion-targeting transit peptide spans Met-1–Phe-14. The next 9 helical transmembrane spans lie at Ile-96–Gly-116, Leu-121–Ile-141, Phe-169–Leu-189, Asn-190–Met-210, Val-213–Trp-233, Leu-242–Ile-262, Val-289–Cys-309, Leu-313–Leu-333, and Phe-345–Leu-365.

Belongs to the UbiA prenyltransferase family. The cofactor is Mg(2+).

The protein resides in the mitochondrion inner membrane. It carries out the reaction an all-trans-polyprenyl diphosphate + 4-hydroxybenzoate = a 4-hydroxy-3-(all-trans-polyprenyl)benzoate + diphosphate. Its pathway is cofactor biosynthesis; ubiquinone biosynthesis. Its function is as follows. Catalyzes the prenylation of para-hydroxybenzoate (PHB) with an all-trans polyprenyl group. Mediates the second step in the final reaction sequence of coenzyme Q (CoQ) biosynthesis, which is the condensation of the polyisoprenoid side chain with PHB, generating the first membrane-bound Q intermediate. The polypeptide is 4-hydroxybenzoate polyprenyltransferase, mitochondrial (Drosophila pseudoobscura pseudoobscura (Fruit fly)).